The chain runs to 425 residues: Bifunctional phosphoribosylaminoimidazole carboxylase/phosphoribosylaminoimidazole succinocarboxamide synthetase (425 aa).

Alanine 2 is subject to N-acetylalanine. The SAICAR synthetase domain stretch occupies residues 2–260; it reads ATAEVLNIGR…WVADRVELLL (259 aa). Position 22 is a phosphotyrosine (tyrosine 22). The residue at position 27 (serine 27) is a Phosphoserine. At lysine 36 the chain carries N6-acetyllysine. At serine 107 the chain carries Phosphoserine. Phosphothreonine is present on threonine 238. Lysine 247 is modified (N6-acetyllysine). The linker stretch occupies residues 261–266; the sequence is KSNSQC. The interval 267–425 is AIR carboxylase domain; that stretch reads RVVVLMGSTS…ADKKIRECNL (159 aa). Serine 274 carries the post-translational modification Phosphoserine. CO2 is bound at residue serine 332.

In the N-terminal section; belongs to the SAICAR synthetase family. The protein in the C-terminal section; belongs to the AIR carboxylase family. Class II subfamily. Homooctamer.

The enzyme catalyses 5-amino-1-(5-phospho-D-ribosyl)imidazole-4-carboxylate + L-aspartate + ATP = (2S)-2-[5-amino-1-(5-phospho-beta-D-ribosyl)imidazole-4-carboxamido]succinate + ADP + phosphate + 2 H(+). It catalyses the reaction 5-amino-1-(5-phospho-D-ribosyl)imidazole-4-carboxylate + H(+) = 5-amino-1-(5-phospho-beta-D-ribosyl)imidazole + CO2. Its pathway is purine metabolism; IMP biosynthesis via de novo pathway; 5-amino-1-(5-phospho-D-ribosyl)imidazole-4-carboxamide from 5-amino-1-(5-phospho-D-ribosyl)imidazole-4-carboxylate: step 1/2. It participates in purine metabolism; IMP biosynthesis via de novo pathway; 5-amino-1-(5-phospho-D-ribosyl)imidazole-4-carboxylate from 5-amino-1-(5-phospho-D-ribosyl)imidazole (carboxylase route): step 1/1. In terms of biological role, bifunctional phosphoribosylaminoimidazole carboxylase and phosphoribosylaminoimidazole succinocarboxamide synthetase catalyzing two reactions of the de novo purine biosynthetic pathway. The protein is Bifunctional phosphoribosylaminoimidazole carboxylase/phosphoribosylaminoimidazole succinocarboxamide synthetase of Rattus norvegicus (Rat).